The following is a 647-amino-acid chain: Chaperone protein DnaK (647 aa).

Thr-199 bears the Phosphothreonine; by autocatalysis mark. The disordered stretch occupies residues 602-647 (MYAQEQAQAGQQAGPGAGSASAGQSGEKPVEGEVVDAEFEEVKDKK). Over residues 604–627 (AQEQAQAGQQAGPGAGSASAGQSG) the composition is skewed to low complexity.

It belongs to the heat shock protein 70 family.

Acts as a chaperone. The polypeptide is Chaperone protein DnaK (Nitrosomonas eutropha (strain DSM 101675 / C91 / Nm57)).